We begin with the raw amino-acid sequence, 116 residues long: Large ribosomal subunit protein bL17 (116 aa).

This sequence belongs to the bacterial ribosomal protein bL17 family. In terms of assembly, part of the 50S ribosomal subunit. Contacts protein L32.

In Acaryochloris marina (strain MBIC 11017), this protein is Large ribosomal subunit protein bL17.